The primary structure comprises 427 residues: Peptidase B (427 aa).

Mn(2+)-binding residues include Lys195 and Asp200. The active site involves Lys207. Residues Asp218, Asp277, and Glu279 each coordinate Mn(2+). Arg281 is an active-site residue.

This sequence belongs to the peptidase M17 family. In terms of assembly, homohexamer. Mn(2+) is required as a cofactor.

It is found in the cytoplasm. The catalysed reaction is Release of an N-terminal amino acid, Xaa, from a peptide or arylamide. Xaa is preferably Glu or Asp but may be other amino acids, including Leu, Met, His, Cys and Gln.. Probably plays an important role in intracellular peptide degradation. In Escherichia coli (strain K12 / MC4100 / BW2952), this protein is Peptidase B.